A 156-amino-acid polypeptide reads, in one-letter code: Small ribosomal subunit protein uS7 (156 aa).

It belongs to the universal ribosomal protein uS7 family. In terms of assembly, part of the 30S ribosomal subunit. Contacts proteins S9 and S11.

Its function is as follows. One of the primary rRNA binding proteins, it binds directly to 16S rRNA where it nucleates assembly of the head domain of the 30S subunit. Is located at the subunit interface close to the decoding center, probably blocks exit of the E-site tRNA. The sequence is that of Small ribosomal subunit protein uS7 from Shewanella baltica (strain OS223).